Reading from the N-terminus, the 598-residue chain is N-acetylmuramoyl-L-alanine amidase (598 aa).

The first 31 residues, 1 to 31 (MSPGNWKTTMVVRGILLILYGLLLQPEPGTA), serve as a signal peptide directing secretion. Disordered regions lie at residues 172–194 (SSAH…SPNV) and 212–233 (STGV…KAKS). Residue Ser-261 is modified to Phosphoserine. Asn-353 carries an N-linked (GlcNAc...) asparagine glycan. The N-acetylmuramoyl-L-alanine amidase domain occupies 428 to 554 (FLYIHHTYVP…RQLVRTDCPG (127 aa)). Residue His-432 participates in Zn(2+) binding. Residues Cys-441 and Cys-447 are joined by a disulfide bond. Asn-507 carries an N-linked (GlcNAc...) asparagine glycan. Positions 544 and 552 each coordinate Zn(2+).

This sequence belongs to the N-acetylmuramoyl-L-alanine amidase 2 family. The cofactor is Zn(2+).

Its subcellular location is the secreted. The protein resides in the membrane. The catalysed reaction is Hydrolyzes the link between N-acetylmuramoyl residues and L-amino acid residues in certain cell-wall glycopeptides.. In terms of biological role, may play a scavenger role by digesting biologically active peptidoglycan (PGN) into biologically inactive fragments. Has no direct bacteriolytic activity. The sequence is that of N-acetylmuramoyl-L-alanine amidase (PGLYRP2) from Sus scrofa (Pig).